We begin with the raw amino-acid sequence, 352 residues long: Photosystem II protein D1 (352 aa).

Threonine 2 carries the N-acetylthreonine modification. Threonine 2 carries the post-translational modification Phosphothreonine. A run of 3 helical transmembrane segments spans residues 29–46, 118–133, and 142–156; these read YIGW…TATS, HFLL…EWEL, and WIAV…AATA. Histidine 118 provides a ligand contact to chlorophyll a. A pheophytin a-binding site is contributed by tyrosine 126. Residues aspartate 170 and glutamate 189 each contribute to the [CaMn4O5] cluster site. A helical membrane pass occupies residues 197–218; the sequence is FHMLGVAGVFGGSLFSAMHGSL. Histidine 198 contributes to the chlorophyll a binding site. A quinone contacts are provided by residues histidine 215 and 264–265; that span reads SF. Position 215 (histidine 215) interacts with Fe cation. Histidine 272 serves as a coordination point for Fe cation. A helical membrane pass occupies residues 274 to 288; the sequence is FLAAWPVVGIWFTAL. Positions 332, 333, 342, and 344 each coordinate [CaMn4O5] cluster. The propeptide occupies 345–352; the sequence is SVEAPVVG.

Belongs to the reaction center PufL/M/PsbA/D family. As to quaternary structure, PSII is composed of 1 copy each of membrane proteins PsbA, PsbB, PsbC, PsbD, PsbE, PsbF, PsbH, PsbI, PsbJ, PsbK, PsbL, PsbM, PsbT, PsbX, PsbY, PsbZ, Psb30/Ycf12, at least 3 peripheral proteins of the oxygen-evolving complex and a large number of cofactors. It forms dimeric complexes. The D1/D2 heterodimer binds P680, chlorophylls that are the primary electron donor of PSII, and subsequent electron acceptors. It shares a non-heme iron and each subunit binds pheophytin, quinone, additional chlorophylls, carotenoids and lipids. D1 provides most of the ligands for the Mn4-Ca-O5 cluster of the oxygen-evolving complex (OEC). There is also a Cl(-1) ion associated with D1 and D2, which is required for oxygen evolution. The PSII complex binds additional chlorophylls, carotenoids and specific lipids. serves as cofactor. Tyr-161 forms a radical intermediate that is referred to as redox-active TyrZ, YZ or Y-Z. Post-translationally, C-terminally processed by CTPA; processing is essential to allow assembly of the oxygen-evolving complex and thus photosynthetic growth.

It is found in the plastid. The protein localises to the chloroplast thylakoid membrane. It carries out the reaction 2 a plastoquinone + 4 hnu + 2 H2O = 2 a plastoquinol + O2. In terms of biological role, photosystem II (PSII) is a light-driven water:plastoquinone oxidoreductase that uses light energy to abstract electrons from H(2)O, generating O(2) and a proton gradient subsequently used for ATP formation. It consists of a core antenna complex that captures photons, and an electron transfer chain that converts photonic excitation into a charge separation. The D1/D2 (PsbA/PsbD) reaction center heterodimer binds P680, the primary electron donor of PSII as well as several subsequent electron acceptors. The chain is Photosystem II protein D1 from Zygnema circumcarinatum (Green alga).